The following is a 397-amino-acid chain: Proteinase-activated receptor 2 (397 aa).

An N-terminal signal peptide occupies residues 1 to 25; it reads MRSLSLAWLLGGITLLAASASCNRT. N-linked (GlcNAc...) asparagine glycosylation is present at Asn23. A propeptide spans 26–36 (removed for receptor activation); that stretch reads VNAPGPNSKGR. At 37 to 71 the chain is on the extracellular side; that stretch reads SLIGRLDTPPPITGKGAPVEPGFSVDEFSASVLTG. Residues 72-101 traverse the membrane as a helical segment; the sequence is KLTTVFLPVIYIIVFVIGLPSNGMALWVFF. The Cytoplasmic segment spans residues 102–108; sequence FRTKKKH. The chain crosses the membrane as a helical span at residues 109-137; the sequence is PAVIYMANLALADLLSVIWFPLKISYHLH. At 138 to 149 the chain is on the extracellular side; it reads GNDWTYGDALCK. Cys148 and Cys226 form a disulfide bridge. A helical transmembrane segment spans residues 150 to 177; sequence VLIGFFYGNMYCSILFMTCLSVQRYWVI. Residues 178–183 are Cytoplasmic-facing; the sequence is VNPMGH. A helical transmembrane segment spans residues 184 to 211; sequence SRKRANIAVGVSLAIWLLIFLVTIPLYV. Over 212 to 235 the chain is Extracellular; that stretch reads MRQTIYIPALNITTCHDVLPEEVL. Asn222 carries N-linked (GlcNAc...) asparagine glycosylation. A helical transmembrane segment spans residues 236–269; sequence VGDMFSYFLSLAIGVFLFPALLTASAYVLMIKTL. Residues 270-277 are Cytoplasmic-facing; it reads RSSAMDEH. A helical membrane pass occupies residues 278 to 317; that stretch reads SEKKRRRAIRLIITVLSMYFICFAPSNVLLVVHYFLIKSQ. Residues 318-323 are Extracellular-facing; the sequence is RQSHVY. Residues 324–347 form a helical membrane-spanning segment; sequence ALYLVALCLSTLNSCIDPFVYYFV. Residues 348–397 lie on the Cytoplasmic side of the membrane; the sequence is SKDFRDQARNALLCRSVRTVKRMQISLTSNKFSRKSSSYSSSSTSVKTSY. The S-palmitoyl cysteine moiety is linked to residue Cys361.

Belongs to the G-protein coupled receptor 1 family. Interacts with TLR4, COPS5 and TMED2. Interacts with GNAQ, GNA11, GNA12, GNA13 and GNA14. Post-translationally, a proteolytic cleavage generates a new N-terminus that functions as a tethered ligand. Activating serine proteases include trypsin, mast cell tryptase, coagulation factors VII and Xa, myeloblastin/PRTN3 and membrane-type serine protease 1/ST14. Proposed subsequent cleavage by serine proteases is leading to receptor deactivation and include neutrophil elastase and cathepsin G. At least in part, implicated proteases are also shown to activate the receptor; the glycosylation status of the receptor is thought to contribute to the difference. N-glycosylated and sialylated. In terms of processing, multiple phosphorylated on serine and threonine residues in the cytoplasmic region upon receptor activation; required for receptor desensitization and recruitment of beta-arrestin. Post-translationally, monoubiquitinated by Cbl at the plasma membrane and in early endosomes; not required for receptor endocytosis but for translocation to late endosomes or lysosomes. Deubiquitination involves Stambp and Usp8; required for lysosomal trafficking and receptor degradation.

It localises to the cell membrane. In terms of biological role, receptor for trypsin and trypsin-like enzymes coupled to G proteins. Its function is mediated through the activation of several signaling pathways including phospholipase C (PLC), intracellular calcium, mitogen-activated protein kinase (MAPK), I-kappaB kinase/NF-kappaB and Rho. Can also be transactivated by cleaved F2R/PAR1. Involved in modulation of inflammatory responses and regulation of innate and adaptive immunity, and acts as a sensor for proteolytic enzymes generated during infection. Generally is promoting inflammation. Can signal synergistically with TLR4 and probably TLR2 in inflammatory responses and modulates Tlr3 signaling. Has a protective role in establishing the endothelial barrier; the activity involves coagulation factor X. Regulates endothelial cell barrier integrity during neutrophil extravasation, probably following proteolytic cleavage by PRTN3. Proposed to have a bronchoprotective role in airway epithelium, but also shown to compromise the airway epithelial barrier by interrupting E-cadherin adhesion. Involved in the regulation of vascular tone; activation results in hypotension presumably mediated by vasodilation. Associates with a subset of G proteins alpha subunits such as GNAQ, GNA11, GNA14, GNA12 and GNA13, but probably not with G(o)-alpha, G(i) subunit alpha-1 and G(i) subunit alpha-2. Believed to be a class B receptor which internalizes as a complex with arrestin and traffic with it to endosomal vesicles, presumably as desensitized receptor, for extended periods of time. Mediates inhibition of TNF-alpha stimulated JNK phosphorylation via coupling to G GNAQ and GNA11; the function involves dissociation of RIPK1 and Tradd from TNFR1. Mediates phosphorylation of nuclear factor NF-kappa-B RELA subunit at 'Ser-536'; the function involves Ikbkb and is predominantly independent of G proteins. Involved in cellular migration. Involved in cytoskeletal rearrangement and chemotaxis through beta-arrestin-promoted scaffolds; the function is independent of GNAQ and GNA11 and involves promotion of cofilin dephosphorylation and actin filament severing. Induces redistribution of COPS5 from the plasma membrane to the cytosol and activation of the JNK cascade is mediated by Cops5. Involved in the recruitment of leukocytes to the sites of inflammation and is the major PAR receptor capable of modulating eosinophil function such as pro-inflammatory cytokine secretion, superoxide production and degranulation. During inflammation promotes dendritic cell maturation, trafficking to the lymph nodes and subsequent T-cell activation. Involved in antimicrobial response of innate immune cells; activation enhances phagocytosis of Gram-positive and killing of Gram-negative bacteria. Acts synergistically with interferon-gamma in enhancing antiviral responses. Probably mediates activation of pro-inflammatory and pro-fibrotic responses in fibroblasts, triggered by coagulation factor Xa (F10). Probably mediates activation of barrier protective signaling responses in endothelial cells, triggered by coagulation factor Xa (F10). In Rattus norvegicus (Rat), this protein is Proteinase-activated receptor 2 (F2rl1).